Consider the following 156-residue polypeptide: Sensor histidine kinase component HK2 (156 aa).

The Extracellular segment spans residues Met-1–Arg-42. A helical transmembrane segment spans residues Glu-43 to Ser-63. The HAMP domain maps to Arg-64–Ala-120. Residues Arg-64–Ser-156 are Cytoplasmic-facing. Residues Asp-128–Ser-156 enclose the Histidine kinase; first part domain. The residue at position 131 (His-131) is a Phosphohistidine; by autocatalysis.

In terms of assembly, homodimer. Each monomer interacts with HK1 and the receiver domain of TcrA. Post-translationally, phosphorylated by HK1.

The protein resides in the cell membrane. It catalyses the reaction ATP + protein L-histidine = ADP + protein N-phospho-L-histidine.. In terms of biological role, member of the three-protein two-component system HK1/HK2/TcrA. HK2 transfers its phosphoryl group to TcrA. The sequence is that of Sensor histidine kinase component HK2 from Mycobacterium tuberculosis (strain ATCC 25618 / H37Rv).